The following is a 138-amino-acid chain: Oleosin G (138 aa).

A run of 3 helical transmembrane segments spans residues 14-34, 48-68, and 69-89; these read ILGF…TGLT, VLIF…VAVA, and GFLS…WLYN. The Proline-knot motif lies at 47-58; sequence PVLIFFSPILIP.

This sequence belongs to the oleosin family. Expressed in megagametophytes (at protein level).

It localises to the lipid droplet. The protein resides in the membrane. The protein is Oleosin G of Pinus massoniana (Chinese red pine).